Reading from the N-terminus, the 291-residue chain is Exosome complex component RRP42 (291 aa).

Ala-2 bears the N-acetylalanine mark. Position 116 is an N6-acetyllysine (Lys-116). Residue Ser-177 is modified to Phosphoserine.

It belongs to the RNase PH family. As to quaternary structure, component of the RNA exosome core complex (Exo-9), composed of EXOSC1, EXOSC2, EXOSC3, EXOSC4, EXOSC5, EXOSC6, EXOSC7, EXOSC8 and EXOSC9; within the complex interacts with EXOSC2 and EXOSC4. The catalytically inactive RNA exosome core complex (Exo-9) associates with the catalytic subunit EXOSC10/RRP6. Exo-9 may associate with DIS3 to form the nucleolar exosome complex, or DIS3L to form the cytoplasmic exosome complex. Exo-9 is formed by a hexameric base ring consisting of the heterodimers EXOSC4-EXOSC9, EXOSC5-EXOSC8 and EXOSC6-EXOSC7, and a cap ring consisting of EXOSC1, EXOSC2 and EXOSC3. The RNA exosome complex associates with cofactors C1D/RRP47, MPHOSPH6/MPP6 and MTREX/MTR4. Interacts with ZC3HAV1. Interacts with DIS3; the interaction is direct.

The protein resides in the nucleus. It localises to the nucleolus. It is found in the cytoplasm. Non-catalytic component of the RNA exosome complex which has 3'-&gt;5' exoribonuclease activity and participates in a multitude of cellular RNA processing and degradation events. In the nucleus, the RNA exosome complex is involved in proper maturation of stable RNA species such as rRNA, snRNA and snoRNA, in the elimination of RNA processing by-products and non-coding 'pervasive' transcripts, such as antisense RNA species and promoter-upstream transcripts (PROMPTs), and of mRNAs with processing defects, thereby limiting or excluding their export to the cytoplasm. The RNA exosome may be involved in Ig class switch recombination (CSR) and/or Ig variable region somatic hypermutation (SHM) by targeting AICDA deamination activity to transcribed dsDNA substrates. In the cytoplasm, the RNA exosome complex is involved in general mRNA turnover and specifically degrades inherently unstable mRNAs containing AU-rich elements (AREs) within their 3' untranslated regions, and in RNA surveillance pathways, preventing translation of aberrant mRNAs. It seems to be involved in degradation of histone mRNA. The catalytic inactive RNA exosome core complex of 9 subunits (Exo-9) is proposed to play a pivotal role in the binding and presentation of RNA for ribonucleolysis, and to serve as a scaffold for the association with catalytic subunits and accessory proteins or complexes. The polypeptide is Exosome complex component RRP42 (EXOSC7) (Homo sapiens (Human)).